Reading from the N-terminus, the 245-residue chain is Ribonuclease PH (245 aa).

Phosphate contacts are provided by residues Arg-86 and 124–126 (GTR).

The protein belongs to the RNase PH family. As to quaternary structure, homohexameric ring arranged as a trimer of dimers.

It carries out the reaction tRNA(n+1) + phosphate = tRNA(n) + a ribonucleoside 5'-diphosphate. Its function is as follows. Phosphorolytic 3'-5' exoribonuclease that plays an important role in tRNA 3'-end maturation. Removes nucleotide residues following the 3'-CCA terminus of tRNAs; can also add nucleotides to the ends of RNA molecules by using nucleoside diphosphates as substrates, but this may not be physiologically important. Probably plays a role in initiation of 16S rRNA degradation (leading to ribosome degradation) during starvation. The polypeptide is Ribonuclease PH (Bacillus mycoides (strain KBAB4) (Bacillus weihenstephanensis)).